The sequence spans 399 residues: MKLRLLRCLRQQPAKPAAVMTHKEDQYPVSLDHHVLKDMAKGVRDTTVKILLLGTAESGKTTIIKQMRILHINGFTDDERREKIPEIYQNIHESILQLVGQMGVLGIDFGSCTSERSADYILSLPGSAPEYMNEEYCDHVTTLWNDVGIRACYDRSNEFPLLDSAKYFLDNFVRISDAEYIPSTEDILHSRKITTGISQITFRVPIPKSMGGGEQQFQMYDVGGQRDQRNKWIQVFEGIQAVLFLISCSEFDQNLREDPSQNRLQEALKLFRAVWQNRFLASAGLIVFLNKYDIMERKIRAGKHIVDYFPEYEDFCKRPQQDNCFGESDWTKMFIKQKLVDITQEPFKRHSRNQVDLGTSERECYYHFTVATDTRCIRDVFCDVQKMILSENVSSMGLF.

Residues 46–399 (TTVKILLLGT…SENVSSMGLF (354 aa)) form the G-alpha domain. Residues 49–62 (KILLLGTAESGKTT) are G1 motif. GTP contacts are provided by residues 54–61 (GTAESGKT), 188–194 (LHSRKIT), 221–225 (DVGGQ), 290–293 (NKYD), and Ala-371. Residues 186–194 (DILHSRKIT) are G2 motif. Residue Thr-194 participates in Mg(2+) binding. The G3 motif stretch occupies residues 217-226 (FQMYDVGGQR). The segment at 286-293 (IVFLNKYD) is G4 motif. A G5 motif region spans residues 369–374 (TVATDT).

This sequence belongs to the G-alpha family. G proteins are composed of 3 units; alpha, beta and gamma. The alpha chain contains the guanine nucleotide binding site. During embryogenesis, expressed primarily in the developing gut and transiently in the amnioserosa.

Guanine nucleotide-binding proteins (G proteins) are involved as modulators or transducers in various transmembrane signaling systems. The chain is Guanine nucleotide-binding protein G(f) subunit alpha (Galphaf) from Drosophila melanogaster (Fruit fly).